Reading from the N-terminus, the 431-residue chain is IMP-specific 5'-nucleotidase 1 (431 aa).

Lys117 contacts ATP. Asp157 functions as the Nucleophile in the catalytic mechanism. IMP-binding residues include Asp157, Asp159, Asp165, Thr193, Asp349, and Lys357. Residues Asp157 and Asp159 each coordinate Mg(2+). Asp159 functions as the Proton donor in the catalytic mechanism. Asp388 is a binding site for Mg(2+).

The protein belongs to the ISN1 family. As to quaternary structure, homotetramer. Mg(2+) is required as a cofactor.

The catalysed reaction is IMP + H2O = inosine + phosphate. Its activity is regulated as follows. Allosterically activated by ATP. ATP binding is a prerequisite to magnesium and substrate binding. ATP binds to 2 of the subunits in the homotetramer inducing a closure of these 2 subunits and the release of the C-terminal loop, thereby activating the enzyme. IMP-specific 5'-nucleotidase involved in IMP (inositol monophosphate) degradation. The chain is IMP-specific 5'-nucleotidase 1 (isn-1) from Neurospora crassa (strain ATCC 24698 / 74-OR23-1A / CBS 708.71 / DSM 1257 / FGSC 987).